The chain runs to 332 residues: Phosphate acyltransferase (332 aa).

It belongs to the PlsX family. In terms of assembly, homodimer. Probably interacts with PlsY.

Its subcellular location is the cytoplasm. The catalysed reaction is a fatty acyl-[ACP] + phosphate = an acyl phosphate + holo-[ACP]. The protein operates within lipid metabolism; phospholipid metabolism. Its function is as follows. Catalyzes the reversible formation of acyl-phosphate (acyl-PO(4)) from acyl-[acyl-carrier-protein] (acyl-ACP). This enzyme utilizes acyl-ACP as fatty acyl donor, but not acyl-CoA. The polypeptide is Phosphate acyltransferase (Nitratiruptor sp. (strain SB155-2)).